A 150-amino-acid chain; its full sequence is Large ribosomal subunit protein bL9 (150 aa).

The protein belongs to the bacterial ribosomal protein bL9 family.

Its function is as follows. Binds to the 23S rRNA. The chain is Large ribosomal subunit protein bL9 from Neisseria gonorrhoeae.